Here is a 197-residue protein sequence, read N- to C-terminus: Protein GrpE (197 aa).

Residues 1–27 (MTKQEKAENQEKPTEETVEETPKKETP) show a composition bias toward basic and acidic residues. The segment at 1 to 50 (MTKQEKAENQEKPTEETVEETPKKETPFEPVMEADEVEETTEAQAPVEEA) is disordered. A compositionally biased stretch (acidic residues) spans 32 to 41 (MEADEVEETT).

The protein belongs to the GrpE family. As to quaternary structure, homodimer.

The protein localises to the cytoplasm. Its function is as follows. Participates actively in the response to hyperosmotic and heat shock by preventing the aggregation of stress-denatured proteins, in association with DnaK and GrpE. It is the nucleotide exchange factor for DnaK and may function as a thermosensor. Unfolded proteins bind initially to DnaJ; upon interaction with the DnaJ-bound protein, DnaK hydrolyzes its bound ATP, resulting in the formation of a stable complex. GrpE releases ADP from DnaK; ATP binding to DnaK triggers the release of the substrate protein, thus completing the reaction cycle. Several rounds of ATP-dependent interactions between DnaJ, DnaK and GrpE are required for fully efficient folding. This is Protein GrpE from Latilactobacillus sakei (Lactobacillus sakei).